The following is a 226-amino-acid chain: MTVQKLVATAVLVALVSLILNNAAAFTPNWVYQTLEDGRKRSVGLWKSCWLVDRGKGGTSPGTRTGQVDTHDCEVLGWGSESAGFQESRGTVKLQFDMMRACNLVATAALAVGQITFILGLTGLPLMSPESQCWEEAMAAAFQLASFVLVIGLVTFYRIGPYTNLSWSCYLNIGACLLATLAAAMLIWNILHRREDCMAPRVIVISRSLTARFRRGLDNDYVESPC.

Residues 1 to 5 (MTVQK) are Cytoplasmic-facing. The chain crosses the membrane as a helical span at residues 6–26 (LVATAVLVALVSLILNNAAAF). Topologically, residues 27–103 (TPNWVYQTLE…LQFDMMRACN (77 aa)) are extracellular. Residues 104–124 (LVATAALAVGQITFILGLTGL) traverse the membrane as a helical segment. At 125 to 136 (PLMSPESQCWEE) the chain is on the cytoplasmic side. The chain crosses the membrane as a helical span at residues 137 to 157 (AMAAAFQLASFVLVIGLVTFY). Residues 158 to 170 (RIGPYTNLSWSCY) lie on the Extracellular side of the membrane. N164 carries an N-linked (GlcNAc...) asparagine glycan. Residues 171-191 (LNIGACLLATLAAAMLIWNIL) form a helical membrane-spanning segment. Residues 192–226 (HRREDCMAPRVIVISRSLTARFRRGLDNDYVESPC) lie on the Cytoplasmic side of the membrane.

Its subcellular location is the cell junction. It is found in the adherens junction. It localises to the cell membrane. In terms of biological role, can influence paracellular permeability. Appears to be involved in cell-cell interactions through adherens. In Rattus norvegicus (Rat), this protein is Transmembrane protein 204 (Tmem204).